The following is a 299-amino-acid chain: Pyridoxal 5'-phosphate synthase subunit PdxS (299 aa).

Aspartate 24 contacts D-ribose 5-phosphate. Lysine 81 acts as the Schiff-base intermediate with D-ribose 5-phosphate in catalysis. Glycine 153 contributes to the D-ribose 5-phosphate binding site. Arginine 165 provides a ligand contact to D-glyceraldehyde 3-phosphate. Residues glycine 219 and 240-241 contribute to the D-ribose 5-phosphate site; that span reads GS.

The protein belongs to the PdxS/SNZ family. In the presence of PdxT, forms a dodecamer of heterodimers.

The catalysed reaction is aldehydo-D-ribose 5-phosphate + D-glyceraldehyde 3-phosphate + L-glutamine = pyridoxal 5'-phosphate + L-glutamate + phosphate + 3 H2O + H(+). It functions in the pathway cofactor biosynthesis; pyridoxal 5'-phosphate biosynthesis. Functionally, catalyzes the formation of pyridoxal 5'-phosphate from ribose 5-phosphate (RBP), glyceraldehyde 3-phosphate (G3P) and ammonia. The ammonia is provided by the PdxT subunit. Can also use ribulose 5-phosphate and dihydroxyacetone phosphate as substrates, resulting from enzyme-catalyzed isomerization of RBP and G3P, respectively. The chain is Pyridoxal 5'-phosphate synthase subunit PdxS from Methanococcus maripaludis (strain C7 / ATCC BAA-1331).